We begin with the raw amino-acid sequence, 179 residues long: Ubiquitin-conjugating enzyme E2 2 (179 aa).

The interval 1–28 (MSTPARRRLMRDFKRMQQDPPSGVSASP) is disordered. The UBC core domain occupies 4–150 (PARRRLMRDF…VRETVENSWN (147 aa)). Cys88 serves as the catalytic Glycyl thioester intermediate. A disordered region spans residues 145–179 (VENSWNDDDDEEEEEEDEDEAEDEDDDDDDNIDED). A compositionally biased stretch (acidic residues) spans 149 to 179 (WNDDDDEEEEEEDEDEAEDEDDDDDDNIDED). The tract at residues 151 to 179 (DDDDEEEEEEDEDEAEDEDDDDDDNIDED) is acidic tail.

This sequence belongs to the ubiquitin-conjugating enzyme family.

It is found in the cytoplasm. Its subcellular location is the nucleus. It catalyses the reaction S-ubiquitinyl-[E1 ubiquitin-activating enzyme]-L-cysteine + [E2 ubiquitin-conjugating enzyme]-L-cysteine = [E1 ubiquitin-activating enzyme]-L-cysteine + S-ubiquitinyl-[E2 ubiquitin-conjugating enzyme]-L-cysteine.. It functions in the pathway protein modification; protein ubiquitination. In terms of biological role, catalyzes the covalent attachment of ubiquitin to other proteins. Plays a role in transcription regulation by catalyzing the monoubiquitination of histone H2B to form H2BK123ub1. H2BK123ub1 gives a specific tag for epigenetic transcriptional activation and is also a prerequisite for H3K4me and H3K79me formation. Also involved in postreplication repair of UV-damaged DNA, in N-end rule-dependent protein degradation and in sporulation. The protein is Ubiquitin-conjugating enzyme E2 2 (UBC2) of Candida albicans (strain SC5314 / ATCC MYA-2876) (Yeast).